The sequence spans 163 residues: Shikimate kinase (163 aa).

10-15 (GVGKTT) is an ATP binding site. Position 14 (T14) interacts with Mg(2+). D28, R52, and G75 together coordinate substrate. An ATP-binding site is contributed by R116. R134 is a binding site for substrate. Residue R151 coordinates ATP.

Belongs to the shikimate kinase family. In terms of assembly, monomer. It depends on Mg(2+) as a cofactor.

The protein resides in the cytoplasm. It catalyses the reaction shikimate + ATP = 3-phosphoshikimate + ADP + H(+). It participates in metabolic intermediate biosynthesis; chorismate biosynthesis; chorismate from D-erythrose 4-phosphate and phosphoenolpyruvate: step 5/7. Functionally, catalyzes the specific phosphorylation of the 3-hydroxyl group of shikimic acid using ATP as a cosubstrate. The polypeptide is Shikimate kinase (Streptococcus pyogenes serotype M4 (strain MGAS10750)).